Consider the following 604-residue polypeptide: Glutamine--fructose-6-phosphate aminotransferase [isomerizing] (604 aa).

Cys-2 acts as the Nucleophile; for GATase activity in catalysis. The region spanning 2-218 (CGIVGVVGNR…DKELVVLTKD (217 aa)) is the Glutamine amidotransferase type-2 domain. SIS domains lie at 284–423 (IVKS…ANGK) and 456–594 (VANL…VDKP). Lys-599 acts as the For Fru-6P isomerization activity in catalysis.

Homodimer.

The protein localises to the cytoplasm. The enzyme catalyses D-fructose 6-phosphate + L-glutamine = D-glucosamine 6-phosphate + L-glutamate. Functionally, catalyzes the first step in hexosamine metabolism, converting fructose-6P into glucosamine-6P using glutamine as a nitrogen source. This Streptococcus mutans serotype c (strain ATCC 700610 / UA159) protein is Glutamine--fructose-6-phosphate aminotransferase [isomerizing].